The sequence spans 199 residues: Inducible T-cell costimulator (199 aa).

Residues 1–20 form the signal peptide; that stretch reads MKSGLWYFFLFCLRIKVLTG. Residues 21–140 lie on the Extracellular side of the membrane; sequence EINGSANYEM…YESQLCCQLK (120 aa). Residues 30-132 form the Ig-like V-type domain; it reads MFIFHNGGVQ…LTGGYLHIYE (103 aa). Cystine bridges form between C42–C109 and C63–C83. 2 N-linked (GlcNAc...) asparagine glycosylation sites follow: N89 and N110. Residues 141–161 traverse the membrane as a helical segment; the sequence is FWLPIGCAAFVVVCILGCILI. Residues 162-199 lie on the Cytoplasmic side of the membrane; that stretch reads CWLTKKKYSSSVHDPNGEYMFMRAVNTAKKSRLTDVTL.

In terms of assembly, homodimer; disulfide-linked. Interacts with ICOSLG. Interacts with PIK3R1. Interacts with TBK1; this interaction is critical for the maturation of T follicular regulatory cells. In terms of processing, N-glycosylated. As to expression, activated T-cells. Highly expressed on tonsillar T-cells, which are closely associated with B-cells in the apical light zone of germinal centers, the site of terminal B-cell maturation. Expressed at lower levels in thymus, lung, lymph node and peripheral blood leukocytes. Expressed in the medulla of fetal and newborn thymus.

It is found in the cell membrane. It localises to the secreted. Its function is as follows. Stimulatory receptor expressed in activated or antigen-experienced T-cells that plays an important role in the immune response. Upon binding to its ligand ICOSL expressed on antigen presenting cells (APCs), delivers costimulatory signals that enhances all basic T-cell responses to a foreign antigen, namely proliferation, secretion of lymphokines including IL10, up-regulation of molecules that mediate cell-cell interaction, and effective help for antibody secretion by B-cells. Also acts as a costimulatory receptor critical for the differentiation of T follicular regulatory cells upon immune challenges such as viral infection. Mechanistically, potentiates TCR-induced calcium flux by augmenting PLCG1 activation and actin remodeling. In addition, activates PI3K signaling pathways independently of calcium flux. Essential both for efficient interaction between T and B-cells and for normal antibody responses to T-cell dependent antigens. Prevents the apoptosis of pre-activated T-cells. Plays a critical role in CD40-mediated class switching of immunoglobin isotypes. The sequence is that of Inducible T-cell costimulator (ICOS) from Homo sapiens (Human).